The primary structure comprises 28 residues: DDETTFPCNSGRCACLPEDSHSYTCQSP.

A 4-hydroxyproline mark is found at P17 and P28.

In terms of processing, contains 3 disulfide bonds. In terms of tissue distribution, expressed by the venom duct.

The protein localises to the secreted. The protein is Conotoxin Cl9b of Californiconus californicus (California cone).